The chain runs to 135 residues: MSARSKARKRALDVLFASDVRGEDAVAALDRAIAEGEGPTNDYTATLVRGVVEHQARIDELLSSYSHGWALDRMPAVDRNVLRLGVWELLYADDVPDAVAVSEAMALVTDLSTDESPQFVNGILGSIVRNKPSLA.

It belongs to the NusB family.

Functionally, involved in transcription antitermination. Required for transcription of ribosomal RNA (rRNA) genes. Binds specifically to the boxA antiterminator sequence of the ribosomal RNA (rrn) operons. The sequence is that of Transcription antitermination protein NusB from Nocardioides sp. (strain ATCC BAA-499 / JS614).